Reading from the N-terminus, the 491-residue chain is MTTWDKCLKKIKKNLSTFEYKTWIKPIHVEQNSNLFTVYCNNEYFKKHIKSKYGNLILSTIQECHGNDLIIEYSNKKFSGEKITEVITAGPQANFFSTTSVEIKDESEDTKVVQEPKILKKSNSKDFSSSQELFGFDEAMLITAKEDEEYSFGLPLKEKYVFDSFVVGDANKIARAAAMQVSINPGKLHNPLFIYGGSGLGKTHLMQAIGNHAREVNPNAKIIYTNSEQFIKDYVNSIRLQDQDEFQRVYRSADILLIDDIQFIAGKEGTAQEFFHTFNALYENGKQIILTSDKYPNEIEGLEERLVSRFGYGLTVSVDMPDLETRIAILLKKAHDLGQKLPNETAAFIAENVRTNVRELEGALNRVLTTSKFNHKDPTIEVAQACLRDVIKIQEKKVKIDNIQKVVADFYRIRVKDLTSNQRSRNIARPRQIAMSLARELTSHSLPEIGNAFGGRDHTTVMHAVKAITKLRQSNTSISDDYELLLDKISR.

The domain I, interacts with DnaA modulators stretch occupies residues M1–L69. Residues L69 to L154 are domain II. Residues P155–S371 form a domain III, AAA+ region region. ATP is bound by residues G199, G201, K202, and T203. Positions K372–R491 are domain IV, binds dsDNA.

It belongs to the DnaA family. Oligomerizes as a right-handed, spiral filament on DNA at oriC.

It localises to the cytoplasm. In terms of biological role, plays an essential role in the initiation and regulation of chromosomal replication. ATP-DnaA binds to the origin of replication (oriC) to initiate formation of the DNA replication initiation complex once per cell cycle. Binds the DnaA box (a 9 base pair repeat at the origin) and separates the double-stranded (ds)DNA. Forms a right-handed helical filament on oriC DNA; dsDNA binds to the exterior of the filament while single-stranded (ss)DNA is stabiized in the filament's interior. The ATP-DnaA-oriC complex binds and stabilizes one strand of the AT-rich DNA unwinding element (DUE), permitting loading of DNA polymerase. After initiation quickly degrades to an ADP-DnaA complex that is not apt for DNA replication. Binds acidic phospholipids. This is Chromosomal replication initiator protein DnaA from Francisella tularensis subsp. holarctica (strain LVS).